The primary structure comprises 396 residues: NADH-quinone oxidoreductase subunit D 1 (396 aa).

It belongs to the complex I 49 kDa subunit family. In terms of assembly, NDH-1 is composed of 14 different subunits. Subunits NuoB, C, D, E, F, and G constitute the peripheral sector of the complex.

It is found in the cell inner membrane. It carries out the reaction a quinone + NADH + 5 H(+)(in) = a quinol + NAD(+) + 4 H(+)(out). In terms of biological role, NDH-1 shuttles electrons from NADH, via FMN and iron-sulfur (Fe-S) centers, to quinones in the respiratory chain. The immediate electron acceptor for the enzyme in this species is believed to be ubiquinone. Couples the redox reaction to proton translocation (for every two electrons transferred, four hydrogen ions are translocated across the cytoplasmic membrane), and thus conserves the redox energy in a proton gradient. The chain is NADH-quinone oxidoreductase subunit D 1 from Rhizobium meliloti (strain 1021) (Ensifer meliloti).